We begin with the raw amino-acid sequence, 387 residues long: Succinyl-diaminopimelate desuccinylase (387 aa).

Residue histidine 74 participates in Zn(2+) binding. The active site involves aspartate 76. Aspartate 107 contributes to the Zn(2+) binding site. Residue glutamate 142 is the Proton acceptor of the active site. Zn(2+) contacts are provided by glutamate 143, glutamate 171, and histidine 360.

This sequence belongs to the peptidase M20A family. DapE subfamily. In terms of assembly, homodimer. Requires Zn(2+) as cofactor. Co(2+) serves as cofactor.

The enzyme catalyses N-succinyl-(2S,6S)-2,6-diaminopimelate + H2O = (2S,6S)-2,6-diaminopimelate + succinate. Its pathway is amino-acid biosynthesis; L-lysine biosynthesis via DAP pathway; LL-2,6-diaminopimelate from (S)-tetrahydrodipicolinate (succinylase route): step 3/3. Its function is as follows. Catalyzes the hydrolysis of N-succinyl-L,L-diaminopimelic acid (SDAP), forming succinate and LL-2,6-diaminopimelate (DAP), an intermediate involved in the bacterial biosynthesis of lysine and meso-diaminopimelic acid, an essential component of bacterial cell walls. The protein is Succinyl-diaminopimelate desuccinylase of Rhodopseudomonas palustris (strain TIE-1).